Consider the following 84-residue polypeptide: uncharacterized protein (84 aa).

Belongs to the chlamydial CPn_0711/CT_665/TC_0036 family.

This is an uncharacterized protein from Chlamydia muridarum (strain MoPn / Nigg).